A 95-amino-acid chain; its full sequence is UPF0473 protein GWCH70_2487 (95 aa).

The protein belongs to the UPF0473 family.

The protein is UPF0473 protein GWCH70_2487 of Geobacillus sp. (strain WCH70).